The primary structure comprises 268 residues: Bis(5'-nucleosyl)-tetraphosphatase, symmetrical (268 aa).

The protein belongs to the Ap4A hydrolase family.

The enzyme catalyses P(1),P(4)-bis(5'-adenosyl) tetraphosphate + H2O = 2 ADP + 2 H(+). Functionally, hydrolyzes diadenosine 5',5'''-P1,P4-tetraphosphate to yield ADP. This Nitrosomonas europaea (strain ATCC 19718 / CIP 103999 / KCTC 2705 / NBRC 14298) protein is Bis(5'-nucleosyl)-tetraphosphatase, symmetrical.